The chain runs to 526 residues: Vang-like protein 2 (526 aa).

The interval 1-95 is disordered; it reads MDNESQYSGY…NEDLTRASKE (95 aa). Residues 1-109 are Cytoplasmic-facing; the sequence is MDNESQYSGY…SPLECRRFAG (109 aa). Residues 15 to 33 are compositionally biased toward basic residues; sequence SHSRSSRKHRDRRDRHRSK. 2 stretches are compositionally biased toward basic and acidic residues: residues 34–43 and 58–68; these read SRDSSSRGDK and ESTRGDDRDDN. Residues 70 to 83 are compositionally biased toward low complexity; that stretch reads GETTTVVTGTSEHS. The span at 84–95 shows a compositional bias: basic and acidic residues; that stretch reads VSNEDLTRASKE. A helical membrane pass occupies residues 110–130; the sequence is PIVSGVLGLFALLTPLAFLLL. Residues 131–148 are Extracellular-facing; that stretch reads PQLLWRDSLEPCGTPCEG. A helical membrane pass occupies residues 149-169; that stretch reads LYVSLAFKLLVLLISSWALFL. Residues 170-178 are Cytoplasmic-facing; that stretch reads RPSRSTLPR. The chain crosses the membrane as a helical span at residues 179–199; that stretch reads FFVFRCLLMALVFLFVASYWL. At 200 to 215 the chain is on the extracellular side; the sequence is FYGVRVLEPRERDYRG. Residues 216-236 traverse the membrane as a helical segment; the sequence is IVGYAVSLVDALLFIQYLALV. At 237–526 the chain is on the cytoplasmic side; the sequence is LLEVRHLRPA…VMRLQSETSV (290 aa). The PDZ-binding motif lies at 523–526; sequence ETSV.

It belongs to the Vang family. Interacts with the PDZ domain of dvl2/dsh. As to expression, ubiquitously expressed at the 4-cell stage. In early somitogenesis, becomes more abundant in anterior neural tissue where expression is seen in the neural tube but not in the notochord.

Its subcellular location is the cell membrane. In terms of biological role, plays a role in non-canonical Wnt/planar cell polarity (PCP) signaling to regulate convergent extension cell movements during gastrulation. Acts together with scrib and prickle1 and localizes prickle1 and dvl2/dsh to the plasma membrane. Has an overlapping role with kny during both convergent extension and eye development. In the eye, involved in establishing proper alignment of the anterior neural plate and midline cells expressing shha and shhb/twhh. Has indirect effects on a number of other developmental processes including notochord shape formation, neural progenitor cell morphogenesis, segregation of somites and adaxial cell development. Together with prickle1, required for the posterior (caudal) movement of branchiomotor neurons in the hindbrain independently of, and a few hours after, convergent extension. May be required for cell surface localization of fzd3 and fzd6 in the inner ear. The chain is Vang-like protein 2 from Danio rerio (Zebrafish).